Here is a 1208-residue protein sequence, read N- to C-terminus: Chromosome partition protein Smc (1208 aa).

32–39 (PNGCGKSN) contacts ATP. Coiled coils occupy residues 170–205 (VTKY…GERI), 239–504 (EARA…ARVQ), and 694–1054 (VIER…QLQD).

The protein belongs to the SMC family. In terms of assembly, homodimer.

It is found in the cytoplasm. In terms of biological role, required for chromosome condensation and partitioning. This chain is Chromosome partition protein Smc, found in Thauera aminoaromatica.